The sequence spans 193 residues: Pyridoxal 5'-phosphate synthase subunit PdxT (193 aa).

Position 48 to 50 (48 to 50 (GES)) interacts with L-glutamine. The Nucleophile role is filled by cysteine 80. L-glutamine-binding positions include arginine 109 and 137–138 (IR). Active-site charge relay system residues include histidine 173 and glutamate 175.

It belongs to the glutaminase PdxT/SNO family. In terms of assembly, in the presence of PdxS, forms a dodecamer of heterodimers. Only shows activity in the heterodimer.

The enzyme catalyses aldehydo-D-ribose 5-phosphate + D-glyceraldehyde 3-phosphate + L-glutamine = pyridoxal 5'-phosphate + L-glutamate + phosphate + 3 H2O + H(+). It catalyses the reaction L-glutamine + H2O = L-glutamate + NH4(+). It functions in the pathway cofactor biosynthesis; pyridoxal 5'-phosphate biosynthesis. Catalyzes the hydrolysis of glutamine to glutamate and ammonia as part of the biosynthesis of pyridoxal 5'-phosphate. The resulting ammonia molecule is channeled to the active site of PdxS. The protein is Pyridoxal 5'-phosphate synthase subunit PdxT of Mycobacteroides abscessus (strain ATCC 19977 / DSM 44196 / CCUG 20993 / CIP 104536 / JCM 13569 / NCTC 13031 / TMC 1543 / L948) (Mycobacterium abscessus).